A 587-amino-acid chain; its full sequence is ATP-dependent lipid A-core flippase (587 aa).

The next 5 helical transmembrane spans lie at 31–51 (LIASGIALVFNALADSGLIYL), 68–88 (LKIMAFVVVGMIILRGVTNFI), 145–165 (GSLITIVREGAYIISLLAVMF), 169–189 (WELTLVLFVIGPIIAVLITIV), and 259–279 (VQIIASLALVAVLFLATTPLI). Residues 32–315 (IASGIALVFN…LTNVNSQFQR (284 aa)) form the ABC transmembrane type-1 domain. In terms of domain architecture, ABC transporter spans 347–583 (LEFKNVSFAY…NGAYKQLYSM (237 aa)). An ATP-binding site is contributed by 381–388 (GRSGSGKS).

This sequence belongs to the ABC transporter superfamily. Lipid exporter (TC 3.A.1.106) family. As to quaternary structure, homodimer.

It localises to the cell inner membrane. It carries out the reaction ATP + H2O + lipid A-core oligosaccharideSide 1 = ADP + phosphate + lipid A-core oligosaccharideSide 2.. In terms of biological role, involved in lipopolysaccharide (LPS) biosynthesis. Translocates lipid A-core from the inner to the outer leaflet of the inner membrane. Transmembrane domains (TMD) form a pore in the inner membrane and the ATP-binding domain (NBD) is responsible for energy generation. This Haemophilus influenzae (strain 86-028NP) protein is ATP-dependent lipid A-core flippase.